A 619-amino-acid chain; its full sequence is Tyrosine-protein kinase ZAP-70 (619 aa).

In terms of domain architecture, SH2 1 spans 10-102 (FFYGSISRAE…GLPCNLRKPC (93 aa)). The interval 103 to 162 (NRPSGLEPQPGVFDCLRDAMVRDYVRQTWKLEGEALEQAIISQAPQVEKLIATTAHERMP) is interdomain A. Residues 163-254 (WYHSSLTREE…GLIYCLKEAC (92 aa)) form the SH2 2 domain. The residue at position 248 (tyrosine 248) is a Phosphotyrosine. The segment at 255-337 (PNSSASNASG…KKLFLKRDNL (83 aa)) is interdomain B. Residues 260-309 (SNASGAAAPTLPAHPSTLTHPQRRIDTLNSDGYTPEPARITSPDKPRPMP) are disordered. The residue at position 289 (serine 289) is a Phosphoserine. Position 292 is a phosphotyrosine (tyrosine 292). The residue at position 315 (tyrosine 315) is a Phosphotyrosine; by LCK. Tyrosine 319 is subject to Phosphotyrosine. Positions 338–600 (LIADIELGCG…QRMRACYYSL (263 aa)) constitute a Protein kinase domain. ATP is bound by residues 345–352 (GCGNFGSV) and lysine 369. Aspartate 461 functions as the Proton acceptor in the catalytic mechanism. 2 positions are modified to phosphotyrosine: tyrosine 492 and tyrosine 493. Lysine 544 participates in a covalent cross-link: Glycyl lysine isopeptide (Lys-Gly) (interchain with G-Cter in ubiquitin). An N6-acetyllysine modification is found at lysine 603.

Belongs to the protein kinase superfamily. Tyr protein kinase family. SYK/ZAP-70 subfamily. Interacts with CD247/CD3Z; this interaction docks ZAP70 at the stimulated TCR. Interacts with NFAM1. Interacts with adapter protein SLA; this interaction negatively regulates T-cell receptor signaling. Interacts with FCRL3. Interacts with VAV1. Interacts with CBL; this interaction promotes ubiquitination, internalization and subsequent degradation of CD247/CD3Z. Identified in a complex with CBL and UBE2L3. Interacts with SHB. Interacts with adapter protein SLA2; this interaction negatively regulates T-cell receptor signaling. Interacts with CBLB. Interacts (via SH2 domains) with RHOH; this interaction regulates ZAP70 subcellular localization. Interacts with DEF6. Interacts (ubiquitinated form) with OTUD7B and UBASH3B. In terms of processing, phosphorylated on tyrosine residues upon T-cell antigen receptor (TCR) stimulation. Phosphorylation of Tyr-315 and Tyr-319 are essential for ZAP70 positive function on T-lymphocyte activation whereas Tyr-292 has a negative regulatory role. Within the C-terminal kinase domain, Tyr-492 and Tyr-493 are phosphorylated after TCR induction, Tyr-492 playing a negative regulatory role and Tyr-493 a positive. Tyr-493 is dephosphorylated by PTN22. Ubiquitinated in response to T cell activation. Deubiquitinated by OTUD7B. In terms of tissue distribution, expressed in T- and natural killer cells. Also present in early thymocytes and pro/pre B-cells.

It localises to the cytoplasm. Its subcellular location is the cell membrane. The catalysed reaction is L-tyrosyl-[protein] + ATP = O-phospho-L-tyrosyl-[protein] + ADP + H(+). Its activity is regulated as follows. Activated by phosphorylation at Tyr-493 in the activation loop. Inhibited by staurosporine. In terms of biological role, tyrosine kinase that plays an essential role in regulation of the adaptive immune response. Regulates motility, adhesion and cytokine expression of mature T-cells, as well as thymocyte development. Also contributes to the development and activation of primary B-lymphocytes. When antigen presenting cells (APC) activate T-cell receptor (TCR), a serie of phosphorylations lead to the recruitment of ZAP70 to the doubly phosphorylated TCR component CD247/CD3Z through ITAM motif at the plasma membrane. This recruitment serves to localization to the stimulated TCR and to relieve its autoinhibited conformation. Release of ZAP70 active conformation is further stabilized by phosphorylation mediated by LCK. Subsequently, ZAP70 phosphorylates at least 2 essential adapter proteins: LAT and LCP2. In turn, a large number of signaling molecules are recruited and ultimately lead to lymphokine production, T-cell proliferation and differentiation. Furthermore, ZAP70 controls cytoskeleton modifications, adhesion and mobility of T-lymphocytes, thus ensuring correct delivery of effectors to the APC. ZAP70 is also required for TCR-CD247/CD3Z internalization and degradation through interaction with the E3 ubiquitin-protein ligase CBL and adapter proteins SLA and SLA2. Thus, ZAP70 regulates both T-cell activation switch on and switch off by modulating TCR expression at the T-cell surface. During thymocyte development, ZAP70 promotes survival and cell-cycle progression of developing thymocytes before positive selection (when cells are still CD4/CD8 double negative). Additionally, ZAP70-dependent signaling pathway may also contribute to primary B-cells formation and activation through B-cell receptor (BCR). The protein is Tyrosine-protein kinase ZAP-70 (ZAP70) of Homo sapiens (Human).